Here is a 197-residue protein sequence, read N- to C-terminus: Putative sulfur carrier protein aq_1421 (197 aa).

C17 (cysteine persulfide intermediate) is an active-site residue.

The protein belongs to the sulfur carrier protein TusA family.

This chain is Putative sulfur carrier protein aq_1421, found in Aquifex aeolicus (strain VF5).